The primary structure comprises 629 residues: FAST kinase domain-containing protein 4 (629 aa).

Residues 559–617 (IAFLRWEFPNFNSRSKDLLGRFVLARRHVLAAGFLVVDVPYYEWLDLKSEWQKTAYLKD) form the RAP domain.

This sequence belongs to the FAST kinase family.

The protein localises to the mitochondrion matrix. Plays a role in processing of mitochondrial RNA precursors and in stabilization of a subset of mature mitochondrial RNA species, such as MT-CO1, MT-CO2, MT-CYB, MT-CO3, MT-ND3, MT-ND5 and MT-ATP8/6. May play a role in cell cycle progression. This is FAST kinase domain-containing protein 4 (Tbrg4) from Rattus norvegicus (Rat).